The following is a 371-amino-acid chain: Undecaprenyl-diphosphatase 1 (371 aa).

A run of 3 helical transmembrane segments spans residues P53 to F73, L100 to H120, and L126 to G146. Residues R152 to E226 are disordered. 3 consecutive transmembrane segments (helical) span residues F291–L311, Q322–A342, and T351–F371.

It belongs to the UppP family.

It localises to the cell membrane. The catalysed reaction is di-trans,octa-cis-undecaprenyl diphosphate + H2O = di-trans,octa-cis-undecaprenyl phosphate + phosphate + H(+). Functionally, catalyzes the dephosphorylation of undecaprenyl diphosphate (UPP). Confers resistance to bacitracin. The protein is Undecaprenyl-diphosphatase 1 of Frankia casuarinae (strain DSM 45818 / CECT 9043 / HFP020203 / CcI3).